We begin with the raw amino-acid sequence, 215 residues long: Sodium channel regulatory subunit beta-3 (215 aa).

Residues Met-1–Cys-22 form the signal peptide. At Phe-23–Val-156 the chain is on the extracellular side. Intrachain disulfides connect Cys-26-Cys-48 and Cys-45-Cys-120. An Ig-like C2-type domain is found at Glu-32 to Thr-154. Residues Asn-95, Asn-109, Asn-113, and Asn-121 are each glycosylated (N-linked (GlcNAc...) asparagine). Residues Val-157–Ile-178 form a helical membrane-spanning segment. At Tyr-179–Glu-215 the chain is on the cytoplasmic side.

The protein belongs to the sodium channel auxiliary subunit SCN3B (TC 8.A.17) family. A voltage-gated sodium (Nav) channel consists of an ion-conducting pore-forming alpha subunit functional on its own that is regulated by one or more beta subunits. Forms homodimers and homotrimers. SCN3B is non-covalently associated with alpha subunits and induces the formation of alpha subunit oligomers, including trimers. Interacts with SCN5A/Nav1.5; regulatory subunit of SCN5A/Nav1.5. Interacts with SCN7A/Nav2.1; probable regulatory subunit of SCN7A/Nav2.1. Interacts with SCN10A; regulatory subunit of SCN10A/Nav1.8. Interacts with NFASC; probably involved in targeting the sodium channels to the nodes of Ranvier. Post-translationally, intramolecular disulfide bonds favor the voltage-gated sodium channel oligomeric complex assembly. N-glycosylated.

Its subcellular location is the cell membrane. Its function is as follows. Regulatory subunit of multiple voltage-gated sodium (Nav) channels directly mediating the depolarization of excitable membranes. Navs, also called VGSCs (voltage-gated sodium channels) or VDSCs (voltage-dependent sodium channels), operate by switching between closed and open conformations depending on the voltage difference across the membrane. In the open conformation they allow Na(+) ions to selectively pass through the pore, along their electrochemical gradient. The influx of Na+ ions provokes membrane depolarization, initiating the propagation of electrical signals throughout cells and tissues. The accessory beta subunits participate in localization and functional modulation of the Nav channels. Modulates the activity of SCN2A/Nav1.2, causing a hyperpolarizing shift in the voltage-dependence of inactivation of the channel and increasing the fraction of channels operating in the fast gating mode. Modulates the activity of SCN5A/Nav1.5. Could also regulate the atypical sodium channel SCN7A/Nav2.1. Modulates the activity of SCN10A/Nav1.8, regulating its oligomerization and accelerating the recovery from inactivation. In Bos taurus (Bovine), this protein is Sodium channel regulatory subunit beta-3.